The chain runs to 438 residues: UDP-N-acetylmuramoylalanine--D-glutamate ligase (438 aa).

Glycine 112–threonine 118 contacts ATP.

Belongs to the MurCDEF family.

The protein localises to the cytoplasm. The catalysed reaction is UDP-N-acetyl-alpha-D-muramoyl-L-alanine + D-glutamate + ATP = UDP-N-acetyl-alpha-D-muramoyl-L-alanyl-D-glutamate + ADP + phosphate + H(+). Its pathway is cell wall biogenesis; peptidoglycan biosynthesis. In terms of biological role, cell wall formation. Catalyzes the addition of glutamate to the nucleotide precursor UDP-N-acetylmuramoyl-L-alanine (UMA). The protein is UDP-N-acetylmuramoylalanine--D-glutamate ligase of Yersinia pseudotuberculosis serotype I (strain IP32953).